A 133-amino-acid chain; its full sequence is Small ribosomal subunit protein mS23 (133 aa).

This sequence belongs to the mitochondrion-specific ribosomal protein mS23 family. Component of the mitochondrial ribosome small subunit (28S) which comprises a 12S rRNA and about 30 distinct proteins.

It localises to the mitochondrion. The polypeptide is Small ribosomal subunit protein mS23 (mrps-23) (Caenorhabditis elegans).